Consider the following 274-residue polypeptide: Large ribosomal subunit protein uL2 (274 aa).

Residues 224–256 (AMNPIDHPHGGGEGRTGEGRHAVDPWGNLTKGY) are disordered. Residues 229-246 (DHPHGGGEGRTGEGRHAV) show a composition bias toward basic and acidic residues.

This sequence belongs to the universal ribosomal protein uL2 family. As to quaternary structure, part of the 50S ribosomal subunit. Forms a bridge to the 30S subunit in the 70S ribosome.

In terms of biological role, one of the primary rRNA binding proteins. Required for association of the 30S and 50S subunits to form the 70S ribosome, for tRNA binding and peptide bond formation. It has been suggested to have peptidyltransferase activity; this is somewhat controversial. Makes several contacts with the 16S rRNA in the 70S ribosome. The polypeptide is Large ribosomal subunit protein uL2 (Acidovorax sp. (strain JS42)).